A 662-amino-acid chain; its full sequence is Interferon-induced GTP-binding protein Mx1 (662 aa).

N-acetylmethionine is present on Met-1. In terms of domain architecture, Dynamin-type G spans 67–340 (DLALPAIAVI…LITHICKSLP (274 aa)). The interval 77-84 (GDQSSGKS) is G1 motif. 77 to 84 (GDQSSGKS) contacts GTP. The interval 102 to 104 (VTR) is G2 motif. The tract at residues 178–181 (DLPG) is G3 motif. GTP is bound by residues 178–182 (DLPGI) and 247–250 (TKPD). The interval 247-250 (TKPD) is G4 motif. Residues 279–282 (KCRG) are G5 motif. The bundle signaling element (BSE) stretch occupies residues 341–366 (LLENQIRESHQRITEELQKYGVDVPE). The interval 366-533 (EDENEKMFFL…HFQMEQIVYC (168 aa)) is middle domain. The segment at 367-632 (DENEKMFFLI…KDTYSWLLKE (266 aa)) is stalk. The interval 554 to 557 (KKKK) is critical for lipid-binding. Residues 574–662 (MEEIFQHLMA…ARRRLAQFPG (89 aa)) enclose the GED domain.

It belongs to the TRAFAC class dynamin-like GTPase superfamily. Dynamin/Fzo/YdjA family. As to quaternary structure, homooligomer. Oligomerizes into multimeric filamentous or ring-like structures by virtue of its stalk domain. Oligomerization is critical for GTPase activity, protein stability, and recognition of viral target structures. Interacts with TRPC1, TRPC3, TRPC4, TRPC5, TRPC6 and TRPC7. Interacts with HSPA5. Interacts with TUBB/TUBB5. Interacts with DDX39A and DDX39B. In terms of processing, ISGylated.

It localises to the cytoplasm. Its subcellular location is the endoplasmic reticulum membrane. The protein resides in the perinuclear region. In terms of biological role, interferon-induced dynamin-like GTPase with antiviral activity. The polypeptide is Interferon-induced GTP-binding protein Mx1 (MX1) (Pongo abelii (Sumatran orangutan)).